Consider the following 92-residue polypeptide: Cell division topological specificity factor (92 aa).

Belongs to the MinE family.

In terms of biological role, prevents the cell division inhibition by proteins MinC and MinD at internal division sites while permitting inhibition at polar sites. This ensures cell division at the proper site by restricting the formation of a division septum at the midpoint of the long axis of the cell. This chain is Cell division topological specificity factor, found in Colwellia psychrerythraea (strain 34H / ATCC BAA-681) (Vibrio psychroerythus).